A 233-amino-acid chain; its full sequence is Phosphoribosylformylglycinamidine synthase subunit PurQ (233 aa).

The Glutamine amidotransferase type-1 domain occupies 3 to 233 (SAVLVFPGIN…GLVAHLERAA (231 aa)). The active-site Nucleophile is C87. Catalysis depends on residues H204 and E206.

In terms of assembly, part of the FGAM synthase complex composed of 1 PurL, 1 PurQ and 2 PurS subunits.

The protein resides in the cytoplasm. The catalysed reaction is N(2)-formyl-N(1)-(5-phospho-beta-D-ribosyl)glycinamide + L-glutamine + ATP + H2O = 2-formamido-N(1)-(5-O-phospho-beta-D-ribosyl)acetamidine + L-glutamate + ADP + phosphate + H(+). It carries out the reaction L-glutamine + H2O = L-glutamate + NH4(+). It participates in purine metabolism; IMP biosynthesis via de novo pathway; 5-amino-1-(5-phospho-D-ribosyl)imidazole from N(2)-formyl-N(1)-(5-phospho-D-ribosyl)glycinamide: step 1/2. Part of the phosphoribosylformylglycinamidine synthase complex involved in the purines biosynthetic pathway. Catalyzes the ATP-dependent conversion of formylglycinamide ribonucleotide (FGAR) and glutamine to yield formylglycinamidine ribonucleotide (FGAM) and glutamate. The FGAM synthase complex is composed of three subunits. PurQ produces an ammonia molecule by converting glutamine to glutamate. PurL transfers the ammonia molecule to FGAR to form FGAM in an ATP-dependent manner. PurS interacts with PurQ and PurL and is thought to assist in the transfer of the ammonia molecule from PurQ to PurL. This Nitrobacter winogradskyi (strain ATCC 25391 / DSM 10237 / CIP 104748 / NCIMB 11846 / Nb-255) protein is Phosphoribosylformylglycinamidine synthase subunit PurQ.